We begin with the raw amino-acid sequence, 189 residues long: UPF0301 protein CTA_0231 (189 aa).

Belongs to the UPF0301 (AlgH) family.

The sequence is that of UPF0301 protein CTA_0231 from Chlamydia trachomatis serovar A (strain ATCC VR-571B / DSM 19440 / HAR-13).